A 461-amino-acid polypeptide reads, in one-letter code: Ornithine decarboxylase (461 aa).

N6-(pyridoxal phosphate)lysine is present on Lys69. Residues Ser200, Gly237, and 274–277 (EPGR) each bind pyridoxal 5'-phosphate. Residue Ser303 is modified to Phosphoserine; by CK2. 331–332 (YD) is a substrate binding site. Cys360 serves as the catalytic Proton donor; shared with dimeric partner. Cys360 carries the post-translational modification S-nitrosocysteine. Asp361 provides a ligand contact to substrate. A pyridoxal 5'-phosphate-binding site is contributed by Tyr389.

This sequence belongs to the Orn/Lys/Arg decarboxylase class-II family. In terms of assembly, homodimer. Only the dimer is catalytically active, as the active sites are constructed of residues from both monomers. It depends on pyridoxal 5'-phosphate as a cofactor.

It carries out the reaction L-ornithine + H(+) = putrescine + CO2. Its pathway is amine and polyamine biosynthesis; putrescine biosynthesis via L-ornithine pathway; putrescine from L-ornithine: step 1/1. With respect to regulation, inhibited by antizymes (AZs) OAZ1, OAZ2 and OAZ3 in response to polyamine levels. AZs inhibit the assembly of the functional homodimer by binding to ODC monomers. Additionally, OAZ1 targets ODC monomers for ubiquitin-independent proteolytic destruction by the 26S proteasome. Functionally, catalyzes the first and rate-limiting step of polyamine biosynthesis that converts ornithine into putrescine, which is the precursor for the polyamines, spermidine and spermine. Polyamines are essential for cell proliferation and are implicated in cellular processes, ranging from DNA replication to apoptosis. The polypeptide is Ornithine decarboxylase (ODC1) (Bos taurus (Bovine)).